The following is a 581-amino-acid chain: Protein alan shepard (581 aa).

Pro residues predominate over residues 1-10 (MHPRYSPAPP). The tract at residues 1-73 (MHPRYSPAPP…AVTAAPPTPR (73 aa)) is disordered. A Phosphotyrosine modification is found at Tyr5. A compositionally biased stretch (polar residues) spans 35-54 (ANNSQQLPPQMPRSQNYANG). Residues 55–68 (SSSSAAAASAVTAA) are compositionally biased toward low complexity. Tyr128 and Tyr146 each carry phosphotyrosine. The span at 168 to 226 (PATTTYGQRVPTAASPSNTNSSSSSNTGSQSGTLSTSLSHTTNTNTNMGPNGTAQNQNQ) shows a compositional bias: low complexity. Residues 168–234 (PATTTYGQRV…NQQGGGGEQL (67 aa)) form a disordered region. RRM domains follow at residues 237-310 (TNLY…MAKQ) and 316-395 (TNLY…FADG). The segment at 555-581 (MTDSEQASTAASPDEAYTQYPHQAAPK) is disordered.

Its function is as follows. Has a role in the perception of gravity. The sequence is that of Protein alan shepard from Drosophila willistoni (Fruit fly).